Reading from the N-terminus, the 138-residue chain is Protein PsiE homolog (138 aa).

The next 4 membrane-spanning stretches (helical) occupy residues 12-34, 56-76, 84-104, and 109-129; these read YLLQALLNVCLFFLALALSALLI, YEMLGELLIFFMYFEFIALII, HFPLRYFIYIGITAVIRLIII, and AISTFWWAMAILAMICGFFIA.

Belongs to the PsiE family.

The protein localises to the cell membrane. The chain is Protein PsiE homolog from Bacillus subtilis (strain 168).